Consider the following 278-residue polypeptide: 4-deoxy-L-threo-5-hexosulose-uronate ketol-isomerase (278 aa).

Zn(2+)-binding residues include histidine 196, histidine 198, glutamate 203, and histidine 245.

Belongs to the KduI family. As to quaternary structure, homohexamer. The cofactor is Zn(2+).

The enzyme catalyses 5-dehydro-4-deoxy-D-glucuronate = 3-deoxy-D-glycero-2,5-hexodiulosonate. The protein operates within glycan metabolism; pectin degradation; 2-dehydro-3-deoxy-D-gluconate from pectin: step 4/5. Catalyzes the isomerization of 5-dehydro-4-deoxy-D-glucuronate to 3-deoxy-D-glycero-2,5-hexodiulosonate. This Escherichia coli O8 (strain IAI1) protein is 4-deoxy-L-threo-5-hexosulose-uronate ketol-isomerase.